Here is a 436-residue protein sequence, read N- to C-terminus: GTPase Der (436 aa).

EngA-type G domains lie at 4–167 (PIVA…GEEE) and 176–351 (IRLS…ENHK). Residues 10–17 (GRPNVGKS), 57–61 (DTGGI), 119–122 (NKVD), 182–189 (GRPNVGKS), 229–233 (DTAGM), and 294–297 (NKWD) each bind GTP. In terms of domain architecture, KH-like spans 352–436 (KRVQSSTLNE…PIHIIARKRN (85 aa)).

This sequence belongs to the TRAFAC class TrmE-Era-EngA-EngB-Septin-like GTPase superfamily. EngA (Der) GTPase family. In terms of assembly, associates with the 50S ribosomal subunit.

Its function is as follows. GTPase that plays an essential role in the late steps of ribosome biogenesis. In Staphylococcus aureus (strain Mu3 / ATCC 700698), this protein is GTPase Der.